A 340-amino-acid chain; its full sequence is HTH-type transcriptional regulator GalS (340 aa).

The 56-residue stretch at 1–56 folds into the HTH lacI-type domain; that stretch reads MITIRDVARQAGVSVATVSRVLNNSALVSPDTRDAVMQAVTLLGYRPNANAQALAT. A DNA-binding region (H-T-H motif) is located at residues 4-23; the sequence is IRDVARQAGVSVATVSRVLN.

In terms of assembly, homodimer.

Its function is as follows. Repressor of the mgl operon. Binds galactose and D-fucose as inducers. GalS binds to an operator DNA sequence within its own coding sequence. The protein is HTH-type transcriptional regulator GalS (galS) of Salmonella typhimurium (strain LT2 / SGSC1412 / ATCC 700720).